The sequence spans 545 residues: Solute carrier family 22 member 6 (545 aa).

Residues 1-9 (MAFNDLLKQ) are Cytoplasmic-facing. The helical transmembrane segment at 10–30 (VGGVGRFQLIQVTMVVAPLLL) threads the bilayer. The Extracellular portion of the chain corresponds to 31 to 129 (MASHNTLQNF…LVCSHRAFRQ (99 aa)). N-linked (GlcNAc...) asparagine glycans are attached at residues N39, N56, N86, N91, and N107. A helical membrane pass occupies residues 130 to 150 (LAQSLFMVGVLLGAMMFGYLA). Topologically, residues 151–157 (DRLGRRK) are cytoplasmic. The chain crosses the membrane as a helical span at residues 158 to 177 (VLILNYLQTAVSGTCAAYAP). N178 is a glycosylation site (N-linked (GlcNAc...) asparagine). Residues 178 to 180 (NYT) are Extracellular-facing. A helical transmembrane segment spans residues 181–201 (VYCIFRLLSGMSLASIAINCM). Residues 202–218 (TLNMEWMPIHTRAYVGT) are Cytoplasmic-facing. Residues 219–239 (LIGYVYSLGQFLLAGIAYAVP) traverse the membrane as a helical segment. Residues 240-242 (HWR) lie on the Extracellular side of the membrane. A helical membrane pass occupies residues 243 to 263 (HLQLAVSVPFFVAFIYSWFFI). The Cytoplasmic portion of the chain corresponds to 264-331 (ESARWYSSSG…ELLRCPTLRR (68 aa)). A helical transmembrane segment spans residues 332–352 (LFLCLSMLWFATSFAYYGLVM). Residues 353-362 (DLQGFGVSMY) lie on the Extracellular side of the membrane. A helical transmembrane segment spans residues 363-383 (LIQVIFGAVDLPAKFVCFLVI). Residues 384 to 389 (NSMGRR) lie on the Cytoplasmic side of the membrane. Residues 390-410 (PAQLASLLLAGICILVNGIIP) form a helical membrane-spanning segment. Topologically, residues 411–419 (RGHTIIRTS) are extracellular. A helical transmembrane segment spans residues 420–440 (LAVLGKGCLASSFNCIFLYTG). The Cytoplasmic segment spans residues 441–450 (ELYPTMIRQT). Residues 451 to 471 (GLGMGSTMARVGSIVSPLISM) form a helical membrane-spanning segment. The Extracellular segment spans residues 472–478 (TAEFYPS). A helical membrane pass occupies residues 479–499 (IPLFIFGAVPVAASAVTALLP). Residues 500-545 (ETLGQPLPDTVQDLKSRSRGKQKQQQLEQQKQMIPLQVSTQEKNGL) are Cytoplasmic-facing. The tract at residues 515–545 (SRSRGKQKQQQLEQQKQMIPLQVSTQEKNGL) is disordered. A compositionally biased stretch (low complexity) spans 522–531 (KQQQLEQQKQ). The segment covering 536-545 (QVSTQEKNGL) has biased composition (polar residues).

Belongs to the major facilitator (TC 2.A.1) superfamily. Organic cation transporter (TC 2.A.1.19) family. Post-translationally, glycosylated. Glycosylation is necessary for proper targeting of the transporter to the plasma membrane. Expressed in kidney. In kidney, restricted to the proximal convoluted tubule (representing S1 and S2 segments). In brain, expressed in neurons of the cortex cerebri and hippocampus as well as in the ependymal cell layer of the choroid plexus.

Its subcellular location is the basolateral cell membrane. The protein localises to the basal cell membrane. It catalyses the reaction (6R)-L-erythro-5,6,7,8-tetrahydrobiopterin(out) + a dicarboxylate(in) = (6R)-L-erythro-5,6,7,8-tetrahydrobiopterin(in) + a dicarboxylate(out). The catalysed reaction is L-erythro-7,8-dihydrobiopterin(out) + a dicarboxylate(in) = L-erythro-7,8-dihydrobiopterin(in) + a dicarboxylate(out). It carries out the reaction L-sepiapterin(out) + a dicarboxylate(in) = L-sepiapterin(in) + a dicarboxylate(out). The enzyme catalyses prostaglandin F2alpha(out) + a dicarboxylate(in) = prostaglandin F2alpha(in) + a dicarboxylate(out). It catalyses the reaction prostaglandin E2(out) + a dicarboxylate(in) = prostaglandin E2(in) + a dicarboxylate(out). The catalysed reaction is 3',5'-cyclic AMP(out) + a dicarboxylate(in) = 3',5'-cyclic AMP(in) + a dicarboxylate(out). It carries out the reaction 3',5'-cyclic GMP(out) + a dicarboxylate(in) = 3',5'-cyclic GMP(in) + a dicarboxylate(out). The enzyme catalyses urate(out) + a dicarboxylate(in) = urate(in) + a dicarboxylate(out). It catalyses the reaction kynurenate(out) + glutarate(in) = kynurenate(in) + glutarate(out). The catalysed reaction is (indol-3-yl)acetate(out) + a dicarboxylate(in) = (indol-3-yl)acetate(in) + a dicarboxylate(out). It carries out the reaction indoxyl sulfate(out) + a dicarboxylate(in) = indoxyl sulfate(in) + a dicarboxylate(out). The enzyme catalyses N-benzoylglycine(out) + a dicarboxylate(in) = N-benzoylglycine(in) + a dicarboxylate(out). It catalyses the reaction 3-carboxy-4-methyl-5-propyl-2-furanpropanoate(out) + a dicarboxylate(in) = 3-carboxy-4-methyl-5-propyl-2-furanpropanoate(in) + a dicarboxylate(out). In terms of biological role, secondary active transporter that functions as a Na(+)-independent organic anion (OA)/dicarboxylate antiporter where the uptake of one molecule of OA into the cell is coupled with an efflux of one molecule of intracellular dicarboxylate such as 2-oxoglutarate or glutarate. Mediates the uptake of OA across the basolateral side of proximal tubule epithelial cells, thereby contributing to the renal elimination of endogenous OA from the systemic circulation into the urine. Functions as a biopterin transporters involved in the uptake and the secretion of coenzymes tetrahydrobiopterin (BH4), dihydrobiopterin (BH2) and sepiapterin to urine, thereby determining baseline levels of blood biopterins. Transports prostaglandin E2 (PGE2) and prostaglandin F2-alpha (PGF2-alpha) and may contribute to their renal excretion. Involved in the transport of neuroactive tryptophan metabolites kynurenate (KYNA) and xanthurenate (XA). May transport glutamate. Also involved in the disposition of uremic toxins and potentially toxic xenobiotics by the renal organic anion secretory pathway, helping reduce their undesired toxicological effects on the body. Uremic toxins include the indoxyl sulfate (IS), hippurate/N-benzoylglycine (HA), indole acetate (IA) and 3-carboxy-4- methyl-5-propyl-2-furanpropionate(CMPF) and urate. Xenobiotics include the mycotoxin ochratoxin (OTA). May also contribute to the transport of organic compounds in testes across the blood-testis-barrier. This Mus musculus (Mouse) protein is Solute carrier family 22 member 6.